Reading from the N-terminus, the 286-residue chain is Nucleotide-binding protein HS_1178 (286 aa).

8 to 15 (GRSGAGKS) is an ATP binding site. 56 to 59 (DIRN) is a GTP binding site.

It belongs to the RapZ-like family.

Its function is as follows. Displays ATPase and GTPase activities. In Histophilus somni (strain 129Pt) (Haemophilus somnus), this protein is Nucleotide-binding protein HS_1178.